A 420-amino-acid polypeptide reads, in one-letter code: uncharacterized protein (420 aa).

This is an uncharacterized protein from Pseudanabaena tenuis (strain PCC 7409).